We begin with the raw amino-acid sequence, 682 residues long: Histone deacetylase 18 (682 aa).

The histone deacetylase stretch occupies residues 59-382; that stretch reads KVGLVYDETM…SLACVQVLLE (324 aa). Histidine 191 functions as the Proton donor/acceptor in the catalytic mechanism. Residues aspartate 231, histidine 233, and aspartate 324 each coordinate Zn(2+). The stretch at 430 to 608 forms a coiled coil; that stretch reads SAERNSADAL…DKELQEDRSR (179 aa).

It belongs to the histone deacetylase family. HD type 2 subfamily. The cofactor is Zn(2+). In terms of tissue distribution, expressed in roots, stems, young rosette leaves, flowers and siliques.

The protein resides in the nucleus. It localises to the cytoplasm. It catalyses the reaction N(6)-acetyl-L-lysyl-[histone] + H2O = L-lysyl-[histone] + acetate. Responsible for the deacetylation of lysine residues on the N-terminal part of the core histones (H2A, H2B, H3 and H4). Histone deacetylation gives a tag for epigenetic repression and plays an important role in transcriptional regulation, cell cycle progression and developmental events. Histone deacetylases act via the formation of large multiprotein complexes. Required for appropriate cellular patterning in the root epidermis. Involved in the differentiation of hair and non-hair cells in the root epidermis. Is not directly involved in the regulation of the expression of pattern genes. Regulates the transcription of certain kinase genes, which are components of a positional information relay system, by changing their histone acetylation status. The sequence is that of Histone deacetylase 18 from Arabidopsis thaliana (Mouse-ear cress).